The primary structure comprises 344 residues: Uroporphyrinogen decarboxylase (344 aa).

Substrate-binding positions include 23–27, Asp-73, Tyr-149, Thr-204, and His-321; that span reads RQAGR.

It belongs to the uroporphyrinogen decarboxylase family. Homodimer.

The protein resides in the cytoplasm. It catalyses the reaction uroporphyrinogen III + 4 H(+) = coproporphyrinogen III + 4 CO2. The protein operates within porphyrin-containing compound metabolism; protoporphyrin-IX biosynthesis; coproporphyrinogen-III from 5-aminolevulinate: step 4/4. Catalyzes the decarboxylation of four acetate groups of uroporphyrinogen-III to yield coproporphyrinogen-III. The polypeptide is Uroporphyrinogen decarboxylase (Francisella philomiragia subsp. philomiragia (strain ATCC 25017 / CCUG 19701 / FSC 153 / O#319-036)).